Here is a 440-residue protein sequence, read N- to C-terminus: Protein naked cuticle homolog 1 (440 aa).

Residue G2 is the site of N-myristoyl glycine attachment. Residues 129–164 enclose the EF-hand domain; sequence EEDNRQEWTFTLYDFDNNGKVTREDITSLLHTIYEV. D142, D144, N146, K148, and D153 together coordinate Ca(2+). Residues 192–204 show a composition bias toward polar residues; it reads RWKNCTQTNTDTP. 3 disordered regions span residues 192–221, 272–379, and 421–440; these read RWKN…KTSE, AAPA…QRPK, and RHEH…FYQS. The span at 211 to 221 shows a compositional bias: basic and acidic residues; sequence EKCIEDSKTSE. The segment covering 272 to 293 has biased composition (low complexity); it reads AAPATEPAKPTHATRSSNQSRS. Over residues 324–336 the composition is skewed to basic residues; the sequence is RHTHALRSPKTHR. Residues 352 to 362 show a composition bias toward pro residues; sequence APPPPSVPNQT. Over residues 422–440 the composition is skewed to basic residues; the sequence is HEHHHHHEHHHHYHHFYQS.

It belongs to the NKD family.

Its subcellular location is the cell membrane. The protein localises to the cytoplasm. In terms of biological role, cell autonomous antagonist of the canonical Wnt signaling pathway. May activate a second Wnt signaling pathway that controls planar cell polarity. This Danio rerio (Zebrafish) protein is Protein naked cuticle homolog 1 (nkd1).